The primary structure comprises 487 residues: N-succinylglutamate 5-semialdehyde dehydrogenase (487 aa).

221-226 (GSSRTG) lines the NAD(+) pocket. Catalysis depends on residues E244 and C278.

It belongs to the aldehyde dehydrogenase family. AstD subfamily.

The enzyme catalyses N-succinyl-L-glutamate 5-semialdehyde + NAD(+) + H2O = N-succinyl-L-glutamate + NADH + 2 H(+). Its pathway is amino-acid degradation; L-arginine degradation via AST pathway; L-glutamate and succinate from L-arginine: step 4/5. Functionally, catalyzes the NAD-dependent reduction of succinylglutamate semialdehyde into succinylglutamate. This is N-succinylglutamate 5-semialdehyde dehydrogenase from Pseudomonas entomophila (strain L48).